Reading from the N-terminus, the 107-residue chain is Putative double-stranded DNA mimic protein Spro_2690 (107 aa).

Belongs to the putative dsDNA mimic protein family.

Its function is as follows. May act as a double-stranded DNA (dsDNA) mimic. Probably regulates the activity of a dsDNA-binding protein. The sequence is that of Putative double-stranded DNA mimic protein Spro_2690 from Serratia proteamaculans (strain 568).